We begin with the raw amino-acid sequence, 884 residues long: DNA mismatch repair protein MutS (884 aa).

G601 to S608 contacts ATP. Residues E826–L845 are disordered.

The protein belongs to the DNA mismatch repair MutS family.

In terms of biological role, this protein is involved in the repair of mismatches in DNA. It is possible that it carries out the mismatch recognition step. This protein has a weak ATPase activity. This is DNA mismatch repair protein MutS from Bacillus cereus (strain ATCC 14579 / DSM 31 / CCUG 7414 / JCM 2152 / NBRC 15305 / NCIMB 9373 / NCTC 2599 / NRRL B-3711).